Reading from the N-terminus, the 393-residue chain is Phospholipase A1-II 1 (393 aa).

Residues 200–220 are a coiled coil; the sequence is QVLNEIKRLQDMYEHEETSIT. Residue serine 225 is the Acyl-ester intermediate of the active site. Catalysis depends on charge relay system residues serine 225, aspartate 284, and histidine 321.

It belongs to the AB hydrolase superfamily. Lipase family.

Its subcellular location is the cytoplasm. In terms of biological role, acylhydrolase that catalyzes the hydrolysis of phospholipids at the sn-1 position. This chain is Phospholipase A1-II 1, found in Oryza sativa subsp. indica (Rice).